The sequence spans 245 residues: Bis(5'-nucleosyl)-tetraphosphatase PrpE [asymmetrical] (245 aa).

Belongs to the PrpE family. Ni(2+) serves as cofactor.

It catalyses the reaction P(1),P(4)-bis(5'-guanosyl) tetraphosphate + H2O = GMP + GTP + 2 H(+). In terms of biological role, asymmetrically hydrolyzes Ap4p to yield AMP and ATP. In Anoxybacillus flavithermus (strain DSM 21510 / WK1), this protein is Bis(5'-nucleosyl)-tetraphosphatase PrpE [asymmetrical].